Consider the following 201-residue polypeptide: Small ribosomal subunit protein uS4 (201 aa).

In terms of domain architecture, S4 RNA-binding spans 91-151; it reads SRLDNVVYRA…EKSQKMNWFE (61 aa).

This sequence belongs to the universal ribosomal protein uS4 family. In terms of assembly, part of the 30S ribosomal subunit. Contacts protein S5. The interaction surface between S4 and S5 is involved in control of translational fidelity.

One of the primary rRNA binding proteins, it binds directly to 16S rRNA where it nucleates assembly of the body of the 30S subunit. In terms of biological role, with S5 and S12 plays an important role in translational accuracy. The polypeptide is Small ribosomal subunit protein uS4 (Corynebacterium efficiens (strain DSM 44549 / YS-314 / AJ 12310 / JCM 11189 / NBRC 100395)).